The primary structure comprises 410 residues: Structural protein ORF142 (410 aa).

Disordered stretches follow at residues 1–24 (MNQN…HVDT) and 156–197 (PTST…VNIS). Residues 161–188 (DDNDNENRSDDDDDDDDYRNDREEVEDS) are compositionally biased toward acidic residues.

Its subcellular location is the virion. This chain is Structural protein ORF142, found in Trichoplusia ni ascovirus 2c (TnAV-2c).